A 173-amino-acid polypeptide reads, in one-letter code: Crossover junction endodeoxyribonuclease RuvC (173 aa).

Residues Asp-8, Glu-69, and Asp-141 contribute to the active site. Mg(2+) is bound by residues Asp-8, Glu-69, and Asp-141.

This sequence belongs to the RuvC family. Homodimer which binds Holliday junction (HJ) DNA. The HJ becomes 2-fold symmetrical on binding to RuvC with unstacked arms; it has a different conformation from HJ DNA in complex with RuvA. In the full resolvosome a probable DNA-RuvA(4)-RuvB(12)-RuvC(2) complex forms which resolves the HJ. Mg(2+) is required as a cofactor.

It localises to the cytoplasm. The catalysed reaction is Endonucleolytic cleavage at a junction such as a reciprocal single-stranded crossover between two homologous DNA duplexes (Holliday junction).. The RuvA-RuvB-RuvC complex processes Holliday junction (HJ) DNA during genetic recombination and DNA repair. Endonuclease that resolves HJ intermediates. Cleaves cruciform DNA by making single-stranded nicks across the HJ at symmetrical positions within the homologous arms, yielding a 5'-phosphate and a 3'-hydroxyl group; requires a central core of homology in the junction. The consensus cleavage sequence is 5'-(A/T)TT(C/G)-3'. Cleavage occurs on the 3'-side of the TT dinucleotide at the point of strand exchange. HJ branch migration catalyzed by RuvA-RuvB allows RuvC to scan DNA until it finds its consensus sequence, where it cleaves and resolves the cruciform DNA. This Stenotrophomonas maltophilia (strain R551-3) protein is Crossover junction endodeoxyribonuclease RuvC.